The primary structure comprises 365 residues: uncharacterized protein (365 aa).

Basic and acidic residues-rich tracts occupy residues 1–27 and 315–339; these read MDNV…EDHS and AKDD…ETPK. Disordered regions lie at residues 1-31 and 308-365; these read MDNV…NSYQ and KEEK…CLIS. Positions 340-353 are enriched in polar residues; sequence KASNTPRRNKSNTQ.

It to yeast YGL082w. As to quaternary structure, interacts with sad1.

The protein resides in the cytoplasm. This is an uncharacterized protein from Schizosaccharomyces pombe (strain 972 / ATCC 24843) (Fission yeast).